The primary structure comprises 495 residues: Lysine--tRNA ligase (495 aa).

Positions 406 and 413 each coordinate Mg(2+).

Belongs to the class-II aminoacyl-tRNA synthetase family. Homodimer. Requires Mg(2+) as cofactor.

The protein resides in the cytoplasm. It catalyses the reaction tRNA(Lys) + L-lysine + ATP = L-lysyl-tRNA(Lys) + AMP + diphosphate. The protein is Lysine--tRNA ligase of Staphylococcus aureus (strain COL).